Consider the following 296-residue polypeptide: Protoheme IX farnesyltransferase (296 aa).

Residues 1-9 lie on the Cytoplasmic side of the membrane; the sequence is MMFKQYLQV. Residues 10 to 28 traverse the membrane as a helical segment; sequence TKPGIIFGNLISVIGGFLL. Residues 29–37 are Periplasmic-facing; it reads ASKGSIDYP. A helical membrane pass occupies residues 38-56; that stretch reads LFIYTLVGVSLVVASGCVF. Topologically, residues 57-78 are cytoplasmic; that stretch reads NNFIDRDIDRKMERTKNRVLVK. The helical transmembrane segment at 79–97 threads the bilayer; that stretch reads GLISPGVSLVYATLLGIAG. Over 98 to 107 the chain is Periplasmic; it reads FMLLWFGANP. The chain crosses the membrane as a helical span at residues 108 to 126; it reads LACWLGVMGFVVYVGIYSL. Residues 127–197 are Cytoplasmic-facing; it reads YMKRHSVYGT…YQAANIPVLP (71 aa). The helical transmembrane segment at 198-216 threads the bilayer; sequence VVKGISVAKNHITLYIIAF. At 217–228 the chain is on the periplasmic side; that stretch reads AVATLMLTLGGY. Residues 229 to 247 traverse the membrane as a helical segment; it reads AGYKYLVVAAAVSVWWLGM. Over 248–268 the chain is Cytoplasmic; the sequence is ALRGYKVEDDKVWARKLFGFS. The chain crosses the membrane as a helical span at residues 269–287; the sequence is IIAITALSIMMSVDFMVPN. At 288 to 296 the chain is on the periplasmic side; that stretch reads SQSLLTYVW.

Belongs to the UbiA prenyltransferase family. Protoheme IX farnesyltransferase subfamily.

It localises to the cell inner membrane. It carries out the reaction heme b + (2E,6E)-farnesyl diphosphate + H2O = Fe(II)-heme o + diphosphate. The protein operates within porphyrin-containing compound metabolism; heme O biosynthesis; heme O from protoheme: step 1/1. Its function is as follows. Converts heme B (protoheme IX) to heme O by substitution of the vinyl group on carbon 2 of heme B porphyrin ring with a hydroxyethyl farnesyl side group. This Salmonella arizonae (strain ATCC BAA-731 / CDC346-86 / RSK2980) protein is Protoheme IX farnesyltransferase.